Consider the following 485-residue polypeptide: Proline--tRNA ligase (485 aa).

The protein belongs to the class-II aminoacyl-tRNA synthetase family. ProS type 3 subfamily. In terms of assembly, homodimer.

It localises to the cytoplasm. It carries out the reaction tRNA(Pro) + L-proline + ATP = L-prolyl-tRNA(Pro) + AMP + diphosphate. In terms of biological role, catalyzes the attachment of proline to tRNA(Pro) in a two-step reaction: proline is first activated by ATP to form Pro-AMP and then transferred to the acceptor end of tRNA(Pro). The chain is Proline--tRNA ligase from Aeropyrum pernix (strain ATCC 700893 / DSM 11879 / JCM 9820 / NBRC 100138 / K1).